The primary structure comprises 263 residues: Ribosomal RNA large subunit methyltransferase E (263 aa).

S-adenosyl-L-methionine contacts are provided by Gly50, Trp52, Asp68, Asn84, and Asp109. Lys149 functions as the Proton acceptor in the catalytic mechanism. A TRAM domain is found at 196–254 (PLRKGDKFVVDIEKLGSSGDGAVLIEGFVVFVKEVEVGEKVRIKITDVKPNFAFADVAE).

This sequence belongs to the class I-like SAM-binding methyltransferase superfamily. RNA methyltransferase RlmE family.

Its subcellular location is the cytoplasm. The catalysed reaction is uridine(2552) in 23S rRNA + S-adenosyl-L-methionine = 2'-O-methyluridine(2552) in 23S rRNA + S-adenosyl-L-homocysteine + H(+). In terms of biological role, specifically methylates the uridine in position 2552 of 23S rRNA at the 2'-O position of the ribose in the fully assembled 50S ribosomal subunit. The protein is Ribosomal RNA large subunit methyltransferase E of Methanosarcina barkeri (strain Fusaro / DSM 804).